Consider the following 224-residue polypeptide: Ribose-5-phosphate isomerase A (224 aa).

Residues 26-29 (TGST), 81-84 (DGAD), and 94-97 (KGGG) contribute to the substrate site. E103 (proton acceptor) is an active-site residue. K121 is a binding site for substrate.

Belongs to the ribose 5-phosphate isomerase family. In terms of assembly, homodimer.

It catalyses the reaction aldehydo-D-ribose 5-phosphate = D-ribulose 5-phosphate. It participates in carbohydrate degradation; pentose phosphate pathway; D-ribose 5-phosphate from D-ribulose 5-phosphate (non-oxidative stage): step 1/1. In terms of biological role, catalyzes the reversible conversion of ribose-5-phosphate to ribulose 5-phosphate. In Listeria monocytogenes serotype 4b (strain F2365), this protein is Ribose-5-phosphate isomerase A.